Reading from the N-terminus, the 282-residue chain is Aldo-keto reductase MT3049 (282 aa).

The Proton donor role is filled by Tyr-57. The NADPH site is built by Leu-197, Val-235, Arg-237, Ser-238, Ala-239, Arg-243, Ser-246, Asn-247, and Arg-273.

Belongs to the aldo/keto reductase family.

The polypeptide is Aldo-keto reductase MT3049 (Mycobacterium tuberculosis (strain CDC 1551 / Oshkosh)).